The chain runs to 198 residues: Probable GTP-binding protein EngB (198 aa).

An EngB-type G domain is found at 21-195 (NFSEVAFLGR…EDIIINQTLG (175 aa)). Residues 29 to 36 (GRSNVGKS), 56 to 60 (GKTQL), 81 to 84 (DLPG), 151 to 154 (TKCD), and 174 to 176 (VSN) each bind GTP. Mg(2+) is bound by residues S36 and T58.

Belongs to the TRAFAC class TrmE-Era-EngA-EngB-Septin-like GTPase superfamily. EngB GTPase family. Mg(2+) is required as a cofactor.

Necessary for normal cell division and for the maintenance of normal septation. This Campylobacter jejuni (strain RM1221) protein is Probable GTP-binding protein EngB.